The sequence spans 388 residues: Transcription factor TB1 (388 aa).

Residues Arg-115–Ile-173 form the TCP domain. 2 disordered regions span residues Ser-180–Arg-269 and Ala-289–Ser-331. A compositionally biased stretch (polar residues) spans Ser-187–Asn-201. Composition is skewed to basic and acidic residues over residues Gly-210–Lys-224 and Val-247–Arg-269. One can recognise a R domain in the interval Lys-250–Lys-267. Over residues Ala-289–Thr-314 the composition is skewed to low complexity.

Interacts with MADS57. As to expression, expressed in the axillary bud of the first formed leaf node. Expressed in axillary buds, shoot apical meristem, young leaves, vascular tissues and the tips of crown roots.

Its subcellular location is the nucleus. Functionally, probable transcription factor that functions as a negative regulator of lateral branching, presumably through its expression in axillary buds. Involved in the fine tuning of shoot branching. May function as an integrator of multiple signaling pathways to regulate the development of axillary buds. Works partially downstream of strigolactones to inhibit bud outgrowth. Binds to MADS57 to suppress the negative regulation of D14 by MADS57 and balance the expression of D14 for tillering. The protein is Transcription factor TB1 of Oryza sativa subsp. japonica (Rice).